We begin with the raw amino-acid sequence, 219 residues long: Adenylate kinase (219 aa).

10–15 (GAGKGT) is an ATP binding site. The segment at 30–59 (STGDMLRAAVKAGTPLGQQAKKVMDAGELV) is NMP. AMP-binding positions include Thr31, Arg36, 57-59 (ELV), 85-88 (GFPR), and Gln92. Residues 122 to 159 (GRRVHPGSGRVYHVEHNPPKEEGKDDVTGEPLVQRDDD) are LID. Residues Arg123 and 132-133 (VY) contribute to the ATP site. The tract at residues 129–152 (SGRVYHVEHNPPKEEGKDDVTGEP) is disordered. A compositionally biased stretch (basic and acidic residues) spans 133 to 152 (YHVEHNPPKEEGKDDVTGEP). Residues Arg156 and Arg167 each coordinate AMP. ATP is bound at residue Gly203.

Belongs to the adenylate kinase family. As to quaternary structure, monomer.

The protein localises to the cytoplasm. It catalyses the reaction AMP + ATP = 2 ADP. It participates in purine metabolism; AMP biosynthesis via salvage pathway; AMP from ADP: step 1/1. Catalyzes the reversible transfer of the terminal phosphate group between ATP and AMP. Plays an important role in cellular energy homeostasis and in adenine nucleotide metabolism. The polypeptide is Adenylate kinase (Alkalilimnicola ehrlichii (strain ATCC BAA-1101 / DSM 17681 / MLHE-1)).